The following is a 223-amino-acid chain: UPF0758 protein HD_0732 (223 aa).

The MPN domain occupies 98–220 (TINTPHLAIM…YFSFEEERFH (123 aa)). Zn(2+)-binding residues include histidine 169, histidine 171, and aspartate 182. The JAMM motif motif lies at 169 to 182 (HNHPSGNCTASQAD).

This sequence belongs to the UPF0758 family.

This is UPF0758 protein HD_0732 from Haemophilus ducreyi (strain 35000HP / ATCC 700724).